A 263-amino-acid chain; its full sequence is Oxidoreductase UcpA (263 aa).

Residue 10–32 participates in NAD(+) binding; sequence LITGALQGIGEGIARTFARHGAN. Ser141 is a binding site for substrate. Tyr155 functions as the Proton acceptor in the catalytic mechanism.

The protein belongs to the short-chain dehydrogenases/reductases (SDR) family.

The protein is Oxidoreductase UcpA (ucpA) of Escherichia coli (strain K12).